The chain runs to 234 residues: Probable transcriptional regulatory protein MYCGA1330 (234 aa).

The protein belongs to the TACO1 family.

The protein resides in the cytoplasm. This chain is Probable transcriptional regulatory protein MYCGA1330, found in Mycoplasmoides gallisepticum (strain R(low / passage 15 / clone 2)) (Mycoplasma gallisepticum).